Reading from the N-terminus, the 250-residue chain is DNA repair protein RecO (250 aa).

The protein belongs to the RecO family.

Involved in DNA repair and RecF pathway recombination. This chain is DNA repair protein RecO, found in Staphylococcus haemolyticus (strain JCSC1435).